The primary structure comprises 201 residues: ATP-dependent Clp protease proteolytic subunit (201 aa).

Catalysis depends on serine 98, which acts as the Nucleophile. Histidine 123 is a catalytic residue.

This sequence belongs to the peptidase S14 family. Fourteen ClpP subunits assemble into 2 heptameric rings which stack back to back to give a disk-like structure with a central cavity, resembling the structure of eukaryotic proteasomes.

It is found in the cytoplasm. It carries out the reaction Hydrolysis of proteins to small peptides in the presence of ATP and magnesium. alpha-casein is the usual test substrate. In the absence of ATP, only oligopeptides shorter than five residues are hydrolyzed (such as succinyl-Leu-Tyr-|-NHMec, and Leu-Tyr-Leu-|-Tyr-Trp, in which cleavage of the -Tyr-|-Leu- and -Tyr-|-Trp bonds also occurs).. Cleaves peptides in various proteins in a process that requires ATP hydrolysis. Has a chymotrypsin-like activity. Plays a major role in the degradation of misfolded proteins. The sequence is that of ATP-dependent Clp protease proteolytic subunit from Rickettsia akari (strain Hartford).